A 184-amino-acid chain; its full sequence is MSEREKITIENIVASTSLAEHLDLSRIALALDGSEYEPEQFPGLIYRLQEPKTAVLIFRSGKVNCTGAKNIEDVKRTIKIIIDKLKAADIEVYDDPQIIVQNIVAVYDLESELNLTDIAMSLGLENVEYEPEQFPGLVYRVEEPRVVLLLFGSGKVVCTGAKEESEIEQAVIKVKKELQKVGLI.

Repeat copies occupy residues 9–85 (IENI…IDKL) and 100–178 (VQNI…KKEL).

The protein belongs to the TBP family.

Its function is as follows. General factor that plays a role in the activation of archaeal genes transcribed by RNA polymerase. Binds specifically to the TATA box promoter element which lies close to the position of transcription initiation. The chain is TATA-box-binding protein (tbp) from Thermoplasma acidophilum (strain ATCC 25905 / DSM 1728 / JCM 9062 / NBRC 15155 / AMRC-C165).